Here is a 541-residue protein sequence, read N- to C-terminus: Glutamine-dependent NAD(+) synthetase (541 aa).

Positions 4–243 (FKIALAQFSP…EELYYSEFDI (240 aa)) constitute a CN hydrolase domain. E44 acts as the Proton acceptor; for glutaminase activity in catalysis. The active-site For glutaminase activity is K111. Residue Y117 participates in L-glutamine binding. C147 (nucleophile; for glutaminase activity) is an active-site residue. S173 and K179 together coordinate L-glutamine. 286 to 293 (GLSGGIDS) serves as a coordination point for ATP. Deamido-NAD(+) is bound at residue N369. T393 is a binding site for ATP. Residues E398 and K510 each contribute to the deamido-NAD(+) site.

It in the C-terminal section; belongs to the NAD synthetase family.

The enzyme catalyses deamido-NAD(+) + L-glutamine + ATP + H2O = L-glutamate + AMP + diphosphate + NAD(+) + H(+). It participates in cofactor biosynthesis; NAD(+) biosynthesis; NAD(+) from deamido-NAD(+) (L-Gln route): step 1/1. In terms of biological role, catalyzes the ATP-dependent amidation of deamido-NAD to form NAD. Uses L-glutamine as a nitrogen source. In vitro, can also use ammonia as donor with comparable specific activity, but cannot use nicotinate mononucleotide (NaMN) as substrate. The protein is Glutamine-dependent NAD(+) synthetase of Acinetobacter baylyi (strain ATCC 33305 / BD413 / ADP1).